Here is a 468-residue protein sequence, read N- to C-terminus: Probable protein phosphatase 2C 52 (468 aa).

Residues 67–372 form the PPM-type phosphatase domain; that stretch reads SSCIFTQQGR…DDCAVVCLFL (306 aa). D102, G103, D317, and D363 together coordinate Mn(2+). Polar residues predominate over residues 413–429; sequence RSSSDQENETYGNVNTE. The disordered stretch occupies residues 413–442; the sequence is RSSSDQENETYGNVNTETDAEDEKTVGDQN.

Belongs to the PP2C family. Mg(2+) is required as a cofactor. Requires Mn(2+) as cofactor.

It catalyses the reaction O-phospho-L-seryl-[protein] + H2O = L-seryl-[protein] + phosphate. It carries out the reaction O-phospho-L-threonyl-[protein] + H2O = L-threonyl-[protein] + phosphate. The chain is Probable protein phosphatase 2C 52 from Arabidopsis thaliana (Mouse-ear cress).